Here is a 139-residue protein sequence, read N- to C-terminus: FAD synthase (139 aa).

Residues Thr9–Phe10, His14–His17, and Asn92 each bind ATP.

The protein belongs to the archaeal FAD synthase family. Homodimer. Requires a divalent metal cation as cofactor.

It catalyses the reaction FMN + ATP + H(+) = FAD + diphosphate. Its pathway is cofactor biosynthesis; FAD biosynthesis; FAD from FMN: step 1/1. In terms of biological role, catalyzes the transfer of the AMP portion of ATP to flavin mononucleotide (FMN) to produce flavin adenine dinucleotide (FAD) coenzyme. The chain is FAD synthase from Methanocella paludicola (strain DSM 17711 / JCM 13418 / NBRC 101707 / SANAE).